Reading from the N-terminus, the 635-residue chain is 4-hydroxy-3-methylbut-2-enyl diphosphate reductase (635 aa).

The 4-hydroxy-3-methylbut-2-enyl diphosphate reductase stretch occupies residues 1–279 (MSIILAKKSG…KEAIFKMSNK (279 aa)). [4Fe-4S] cluster is bound at residue Cys-12. The (2E)-4-hydroxy-3-methylbut-2-enyl diphosphate site is built by His-42 and His-77. 2 residues coordinate dimethylallyl diphosphate: His-42 and His-77. Residues His-42 and His-77 each contribute to the isopentenyl diphosphate site. Cys-99 contacts [4Fe-4S] cluster. His-127 is a (2E)-4-hydroxy-3-methylbut-2-enyl diphosphate binding site. His-127 lines the dimethylallyl diphosphate pocket. His-127 is an isopentenyl diphosphate binding site. Residue Glu-129 is the Proton donor of the active site. Residue Thr-163 participates in (2E)-4-hydroxy-3-methylbut-2-enyl diphosphate binding. [4Fe-4S] cluster is bound at residue Cys-191. The (2E)-4-hydroxy-3-methylbut-2-enyl diphosphate site is built by Ser-219, Ser-220, Asn-221, and Ser-263. 4 residues coordinate dimethylallyl diphosphate: Ser-219, Ser-220, Asn-221, and Ser-263. Isopentenyl diphosphate-binding residues include Ser-219, Ser-220, Asn-221, and Ser-263. S1 motif domains lie at 298 to 373 (GQEV…LNRE), 380 to 455 (KEAF…ASRR), 476 to 544 (DTIK…LSIK), and 561 to 630 (GNIV…LSIK).

It in the N-terminal section; belongs to the IspH family. It depends on [4Fe-4S] cluster as a cofactor.

It carries out the reaction isopentenyl diphosphate + 2 oxidized [2Fe-2S]-[ferredoxin] + H2O = (2E)-4-hydroxy-3-methylbut-2-enyl diphosphate + 2 reduced [2Fe-2S]-[ferredoxin] + 2 H(+). It catalyses the reaction dimethylallyl diphosphate + 2 oxidized [2Fe-2S]-[ferredoxin] + H2O = (2E)-4-hydroxy-3-methylbut-2-enyl diphosphate + 2 reduced [2Fe-2S]-[ferredoxin] + 2 H(+). It participates in isoprenoid biosynthesis; dimethylallyl diphosphate biosynthesis; dimethylallyl diphosphate from (2E)-4-hydroxy-3-methylbutenyl diphosphate: step 1/1. The protein operates within isoprenoid biosynthesis; isopentenyl diphosphate biosynthesis via DXP pathway; isopentenyl diphosphate from 1-deoxy-D-xylulose 5-phosphate: step 6/6. Its function is as follows. Catalyzes the conversion of 1-hydroxy-2-methyl-2-(E)-butenyl 4-diphosphate (HMBPP) into a mixture of isopentenyl diphosphate (IPP) and dimethylallyl diphosphate (DMAPP). Acts in the terminal step of the DOXP/MEP pathway for isoprenoid precursor biosynthesis. The chain is 4-hydroxy-3-methylbut-2-enyl diphosphate reductase from Clostridium tetani (strain Massachusetts / E88).